A 552-amino-acid chain; its full sequence is Dihydroxy-acid dehydratase (552 aa).

Mg(2+) is bound at residue Asp-78. Cys-119 contributes to the [2Fe-2S] cluster binding site. Mg(2+)-binding residues include Asp-120 and Lys-121. Lys-121 bears the N6-carboxylysine mark. Cys-191 is a [2Fe-2S] cluster binding site. A Mg(2+)-binding site is contributed by Glu-442. The active-site Proton acceptor is the Ser-468.

It belongs to the IlvD/Edd family. As to quaternary structure, homodimer. The cofactor is [2Fe-2S] cluster. Mg(2+) serves as cofactor.

It catalyses the reaction (2R)-2,3-dihydroxy-3-methylbutanoate = 3-methyl-2-oxobutanoate + H2O. The catalysed reaction is (2R,3R)-2,3-dihydroxy-3-methylpentanoate = (S)-3-methyl-2-oxopentanoate + H2O. It participates in amino-acid biosynthesis; L-isoleucine biosynthesis; L-isoleucine from 2-oxobutanoate: step 3/4. Its pathway is amino-acid biosynthesis; L-valine biosynthesis; L-valine from pyruvate: step 3/4. Functions in the biosynthesis of branched-chain amino acids. Catalyzes the dehydration of (2R,3R)-2,3-dihydroxy-3-methylpentanoate (2,3-dihydroxy-3-methylvalerate) into 2-oxo-3-methylpentanoate (2-oxo-3-methylvalerate) and of (2R)-2,3-dihydroxy-3-methylbutanoate (2,3-dihydroxyisovalerate) into 2-oxo-3-methylbutanoate (2-oxoisovalerate), the penultimate precursor to L-isoleucine and L-valine, respectively. The chain is Dihydroxy-acid dehydratase from Moorella thermoacetica (strain ATCC 39073 / JCM 9320).